The chain runs to 416 residues: E3 ubiquitin-protein ligase RNFT1 (416 aa).

Disordered regions lie at residues 1–50 and 68–117; these read MKHR…MSLP and DLSS…DSRE. The segment covering 7–19 has biased composition (basic and acidic residues); it reads HERQSSTESKNLK. Polar residues-rich tracts occupy residues 20 to 45 and 68 to 80; these read ETTQ…SPSA and DLSS…VARS. Residues 81 to 100 are compositionally biased toward basic residues; it reads NSRRVRPSTHGRSPSRHGHT. 6 helical membrane-spanning segments follow: residues 146 to 166, 184 to 204, 214 to 234, 237 to 257, 265 to 287, and 302 to 322; these read LVVQ…TFLY, LQCL…YYTF, VFMN…VVGI, FIGK…PSFV, YWYM…PVWF, and WHFG…IIFG. Residues 349–400 form a required for ubiquitin ligase activity and for protection against ER stress-induced cell death region; the sequence is CSEADGMCAICQAEFTKPIALICQHVFCEECISSWFNKEKTCPLCRTLISNH. The RING-type zinc-finger motif lies at 356-394; sequence CAICQAEFTKPIALICQHVFCEECISSWFNKEKTCPLCR.

The protein localises to the endoplasmic reticulum membrane. It catalyses the reaction S-ubiquitinyl-[E2 ubiquitin-conjugating enzyme]-L-cysteine + [acceptor protein]-L-lysine = [E2 ubiquitin-conjugating enzyme]-L-cysteine + N(6)-ubiquitinyl-[acceptor protein]-L-lysine.. It functions in the pathway protein modification; protein ubiquitination. In terms of biological role, E3 ubiquitin-protein ligase that acts in the endoplasmic reticulum (ER)-associated degradation (ERAD) pathway, which targets misfolded proteins that accumulate in the endoplasmic reticulum (ER) for ubiquitination and subsequent proteasome-mediated degradation. Protects cells from ER stress-induced apoptosis. This is E3 ubiquitin-protein ligase RNFT1 (rnft1) from Xenopus laevis (African clawed frog).